We begin with the raw amino-acid sequence, 366 residues long: tRNA/tmRNA (uracil-C(5))-methyltransferase (366 aa).

Residues Gln-190, Tyr-218, Asn-223, Glu-239, and Asp-299 each contribute to the S-adenosyl-L-methionine site. The active-site Nucleophile is the Cys-324. Glu-358 (proton acceptor) is an active-site residue.

Belongs to the class I-like SAM-binding methyltransferase superfamily. RNA M5U methyltransferase family. TrmA subfamily.

The catalysed reaction is uridine(54) in tRNA + S-adenosyl-L-methionine = 5-methyluridine(54) in tRNA + S-adenosyl-L-homocysteine + H(+). It catalyses the reaction uridine(341) in tmRNA + S-adenosyl-L-methionine = 5-methyluridine(341) in tmRNA + S-adenosyl-L-homocysteine + H(+). Its function is as follows. Dual-specificity methyltransferase that catalyzes the formation of 5-methyluridine at position 54 (m5U54) in all tRNAs, and that of position 341 (m5U341) in tmRNA (transfer-mRNA). The protein is tRNA/tmRNA (uracil-C(5))-methyltransferase of Edwardsiella ictaluri (strain 93-146).